Reading from the N-terminus, the 499-residue chain is MRVIMKPLRRTLVFFIFSVFLCGTVSARQIEWQSCMTSPYSDWFGKESSSPELLCGYLSVPLKYTDTGKDVSDENIPLVRLAMTKLPAKSKRKGSVIIISGGPGLPGINPYINFDWPVTNLRESWDIIGFDPRGVGQSFPAINCQQSNQERLVNVSEKQLILQKINACIHNTGAEVIRHIGSHEAVYDIERIRQALGDKQLTAVAYSYGTQIAALYAERFPSSIRSIVFDGVVDIDDLNDNFSWKLRQAHSYQETFDRFAAWCARTKSCPLSSDRNQAIHQFHQLLLKLHNSPLTDSRGESISSDDLISLTTELLLWRSSWPTLATAVRQFSQGIVSNEIETALNSSIASEKVSDALGVILCVDQSDEQLSQEQRKSRKKALADAFPAVNFEREQSDLPEFCELWPIHRDLQQTRLKNTVLPSGLLFVAHKYDPTTPWINARKMADKFSAPLLTINGDGHTLALAGTNLCVDEAVVRHLLFPGKSEDITCQGSGTGDTN.

The first 26 residues, 1-26 (MRVIMKPLRRTLVFFIFSVFLCGTVS), serve as a signal peptide directing secretion. The region spanning 94 to 393 (GSVIIISGGP…DAFPAVNFER (300 aa)) is the AB hydrolase-1 domain. Ser207 (nucleophile) is an active-site residue. Residue Asp433 is part of the active site. Catalysis depends on His460, which acts as the Proton donor.

The protein belongs to the peptidase S33 family.

The sequence is that of Putative hydrolase YuaR (yuaR) from Escherichia coli (strain K12).